The chain runs to 119 residues: SSB protein (119 aa).

The interval 96–119 (QSQAKQDLFGGSEPIEVNSEDLPF) is disordered.

It belongs to the skunalikevirus SSB protein family. Homodimer; two homodimers can further weakly assemble into a homotetramer.

In terms of biological role, binds ssDNA with nanomolar affinity but no sequence specificity. The chain is SSB protein from Lactococcus phage p2 (Lactococcus lactis bacteriophage p2).